The following is a 569-amino-acid chain: Potassium-transporting ATPase potassium-binding subunit (569 aa).

10 helical membrane-spanning segments follow: residues 3–23 (LMEY…SPVL), 68–88 (AASL…VLML), 136–156 (VGLA…AVAV), 179–199 (VLYV…GQGV), 259–279 (LQML…GGAV), 284–304 (HAWT…CSLY), 384–404 (GLYG…LMVG), 422–442 (AMLA…VAAV), 490–510 (IALA…GVAG), and 534–554 (LLLT…ALAL).

The protein belongs to the KdpA family. The system is composed of three essential subunits: KdpA, KdpB and KdpC.

Its subcellular location is the cell inner membrane. In terms of biological role, part of the high-affinity ATP-driven potassium transport (or Kdp) system, which catalyzes the hydrolysis of ATP coupled with the electrogenic transport of potassium into the cytoplasm. This subunit binds the periplasmic potassium ions and delivers the ions to the membrane domain of KdpB through an intramembrane tunnel. The sequence is that of Potassium-transporting ATPase potassium-binding subunit from Nitratidesulfovibrio vulgaris (strain ATCC 29579 / DSM 644 / CCUG 34227 / NCIMB 8303 / VKM B-1760 / Hildenborough) (Desulfovibrio vulgaris).